The chain runs to 78 residues: Large ribosomal subunit protein bL28 (78 aa).

The tract at residues 1–20 is disordered; it reads MSRVCQVTGKGPVTGNNISH.

Belongs to the bacterial ribosomal protein bL28 family.

The polypeptide is Large ribosomal subunit protein bL28 (Pseudomonas putida (strain W619)).